A 269-amino-acid chain; its full sequence is Probable ribosomal RNA small subunit methyltransferase A (269 aa).

The S-adenosyl-L-methionine site is built by His19, Leu21, Gly46, Glu67, Asp92, and Asn107.

It belongs to the class I-like SAM-binding methyltransferase superfamily. rRNA adenine N(6)-methyltransferase family. RsmA subfamily.

Its subcellular location is the cytoplasm. Functionally, specifically dimethylates two adjacent adenosines in the loop of a conserved hairpin near the 3'-end of 16S rRNA in the 30S particle. May play a critical role in biogenesis of 30S subunits. The sequence is that of Probable ribosomal RNA small subunit methyltransferase A from Methanosarcina acetivorans (strain ATCC 35395 / DSM 2834 / JCM 12185 / C2A).